Reading from the N-terminus, the 563-residue chain is Arginine--tRNA ligase (563 aa).

The short motif at proline 122–histidine 132 is the 'HIGH' region element.

This sequence belongs to the class-I aminoacyl-tRNA synthetase family. As to quaternary structure, monomer.

The protein resides in the cytoplasm. The catalysed reaction is tRNA(Arg) + L-arginine + ATP = L-arginyl-tRNA(Arg) + AMP + diphosphate. The protein is Arginine--tRNA ligase of Latilactobacillus sakei subsp. sakei (strain 23K) (Lactobacillus sakei subsp. sakei).